A 387-amino-acid chain; its full sequence is Cystathionine gamma-lyase (387 aa).

Residues R53, Y105, and R110 each coordinate substrate. Position 202 is an N6-(pyridoxal phosphate)lysine (K202). E329 contributes to the substrate binding site.

It belongs to the trans-sulfuration enzymes family. In terms of assembly, homotetramer. Interacts with CALM in a calcium-dependent manner. Pyridoxal 5'-phosphate is required as a cofactor.

It is found in the cytoplasm. The enzyme catalyses L,L-cystathionine + H2O = 2-oxobutanoate + L-cysteine + NH4(+). It catalyses the reaction L-cysteine + H2O = hydrogen sulfide + pyruvate + NH4(+) + H(+). It carries out the reaction L-homocysteine + H2O = 2-oxobutanoate + hydrogen sulfide + NH4(+) + H(+). The catalysed reaction is L-homoserine = 2-oxobutanoate + NH4(+). Its pathway is amino-acid biosynthesis; L-cysteine biosynthesis; L-cysteine from L-homocysteine and L-serine: step 2/2. Catalyzes the last step in the trans-sulfuration pathway from L-methionine to L-cysteine in a pyridoxal-5'-phosphate (PLP)-dependent manner, which consists on cleaving the L,L-cystathionine molecule into L-cysteine, ammonia and 2-oxobutanoate. Part of the L-cysteine derived from the trans-sulfuration pathway is utilized for biosynthesis of the ubiquitous antioxidant glutathione. Besides its role in the conversion of L-cystathionine into L-cysteine, it utilizes L-cysteine and L-homocysteine as substrates (at much lower rates than L,L-cystathionine) to produce the endogenous gaseous signaling molecule hydrogen sulfide (H2S). In Dictyostelium discoideum (Social amoeba), this protein is Cystathionine gamma-lyase (cysA).